The chain runs to 358 residues: Phospho-N-acetylmuramoyl-pentapeptide-transferase (358 aa).

10 consecutive transmembrane segments (helical) span residues 21 to 41, 71 to 91, 95 to 115, 133 to 153, 166 to 186, 197 to 217, 234 to 254, 261 to 281, 286 to 306, and 337 to 357; these read YLTLRAILGVLTALVISFVVG, TMGGALILVAIAAATLLWADL, YIWVVLVVTLLFGGVGFVDDY, FWQSVIALGVALFLYFTASVA, VAVNLGGYYVLLTYFVVVGSS, GLAVLPTVLVGGALGIFAYAA, AGELVVFCGALVGAGLGFLWF, VFMGDIGALALGAALGILAVL, LVLFIMGGVFVVETVSVMLQV, and IVRFWIITVILVLIGLATLKI.

The protein belongs to the glycosyltransferase 4 family. MraY subfamily. Mg(2+) is required as a cofactor.

It localises to the cell inner membrane. It catalyses the reaction UDP-N-acetyl-alpha-D-muramoyl-L-alanyl-gamma-D-glutamyl-meso-2,6-diaminopimeloyl-D-alanyl-D-alanine + di-trans,octa-cis-undecaprenyl phosphate = di-trans,octa-cis-undecaprenyl diphospho-N-acetyl-alpha-D-muramoyl-L-alanyl-D-glutamyl-meso-2,6-diaminopimeloyl-D-alanyl-D-alanine + UMP. Its pathway is cell wall biogenesis; peptidoglycan biosynthesis. In terms of biological role, catalyzes the initial step of the lipid cycle reactions in the biosynthesis of the cell wall peptidoglycan: transfers peptidoglycan precursor phospho-MurNAc-pentapeptide from UDP-MurNAc-pentapeptide onto the lipid carrier undecaprenyl phosphate, yielding undecaprenyl-pyrophosphoryl-MurNAc-pentapeptide, known as lipid I. This chain is Phospho-N-acetylmuramoyl-pentapeptide-transferase, found in Nitrosococcus oceani (strain ATCC 19707 / BCRC 17464 / JCM 30415 / NCIMB 11848 / C-107).